The primary structure comprises 230 residues: uncharacterized protein (230 aa).

This is an uncharacterized protein from Aquifex aeolicus (strain VF5).